Here is a 391-residue protein sequence, read N- to C-terminus: Chorismate synthase (391 aa).

The NADP(+) site is built by arginine 39 and arginine 45. FMN contacts are provided by residues 133–135 (RAS), 254–255 (QA), glycine 299, 314–318 (KPIAT), and arginine 340.

The protein belongs to the chorismate synthase family. As to quaternary structure, homotetramer. FMNH2 serves as cofactor.

It catalyses the reaction 5-O-(1-carboxyvinyl)-3-phosphoshikimate = chorismate + phosphate. Its pathway is metabolic intermediate biosynthesis; chorismate biosynthesis; chorismate from D-erythrose 4-phosphate and phosphoenolpyruvate: step 7/7. Functionally, catalyzes the anti-1,4-elimination of the C-3 phosphate and the C-6 proR hydrogen from 5-enolpyruvylshikimate-3-phosphate (EPSP) to yield chorismate, which is the branch point compound that serves as the starting substrate for the three terminal pathways of aromatic amino acid biosynthesis. This reaction introduces a second double bond into the aromatic ring system. This is Chorismate synthase from Symbiobacterium thermophilum (strain DSM 24528 / JCM 14929 / IAM 14863 / T).